The primary structure comprises 1138 residues: Myelin regulatory factor (1138 aa).

Topologically, residues 1 to 768 (MEVVDETEAL…CISQRFLQGT (768 aa)) are cytoplasmic. Disordered stretches follow at residues 56 to 150 (TASF…YSPQ), 171 to 200 (VSSR…HYPV), 246 to 267 (AELP…NTLN), and 279 to 339 (PGTV…SDSL). Positions 67–88 (PGSSGLHHLSPPGSGPSPGRHG) are enriched in low complexity. Position 123 is an N6-acetyllysine (K123). Positions 178-198 (PPPPPAHLPGPPPPPPPPPHY) are enriched in pro residues. Positions 250-541 (PHPSKKRKHS…SNPGQFESDS (292 aa)) form a DNA-binding region, NDT80. Positions 254–257 (KKRK) match the Nuclear localization signal motif. Residues 286 to 302 (PPHPARAPSPPWPPQGP) show a composition bias toward pro residues. Residues 329–339 (SPGLLQDSDSL) are compositionally biased toward low complexity. Positions 491 to 494 (KKGK) match the Nuclear localization signal motif. Residues 587 to 696 (SDLRAKEHVQ…KLTDNLETRI (110 aa)) enclose the Peptidase S74 domain. Residues 680–711 (GAVKELCKLTDNLETRIDELERWSHKLAKLRR) adopt a coiled-coil conformation. Polar residues predominate over residues 721-733 (SGAFSHAGSQFSR). The tract at residues 721-753 (SGAFSHAGSQFSRAGSVPHKKRPPKLANKSSPA) is disordered. Residues 765–1003 (LQGTIIALVV…QGQLDPAPSL (239 aa)) are required for interaction with TMEM98. A helical transmembrane segment spans residues 769–789 (IIALVVVMAFSVVSMSTLYVL). The Lumenal portion of the chain corresponds to 790–1138 (SLRSEEDLVD…YYFHFYRLCD (349 aa)). Residues 891–900 (ATDPALGPTL) show a composition bias toward low complexity. Disordered stretches follow at residues 891 to 922 (ATDP…APLP) and 951 to 999 (ASPV…QLDP). 2 stretches are compositionally biased toward polar residues: residues 961 to 974 (QSKT…NLQS) and 987 to 999 (PAQF…QLDP). N-linked (GlcNAc...) asparagine glycans are attached at residues N1030, N1052, and N1116.

Belongs to the MRF family. In terms of assembly, homotrimer. Interacts (via C-terminal region) with TMEM98; the interaction inhibits MYRF self-cleavage. Post-translationally, glycosylated. Follows autocatalytic cleavage via the peptidase S74 domain. Autoprocessing is apparently constitutive and is essential for transcriptional activity. Autocatalytic cleavage is inhibited by interaction with TMEM98. In terms of tissue distribution, specifically expressed by postmitotic oligodendrocytes in the CNS. Not detected in the peripheral nervous system (PNS).

Its subcellular location is the endoplasmic reticulum membrane. It is found in the nucleus. The protein localises to the cytoplasm. Its function is as follows. Constitutes a precursor of the transcription factor. Mediates the autocatalytic cleavage that releases the Myelin regulatory factor, N-terminal component that specifically activates transcription of central nervous system (CNS) myelin genes. Membrane-bound part that has no transcription factor activity and remains attached to the endoplasmic reticulum membrane following cleavage. Functionally, transcription factor that specifically activates expression of myelin genes such as MBP, MOG, MAG, DUSP15 and PLP1 during oligodendrocyte (OL) maturation, thereby playing a central role in oligodendrocyte maturation and CNS myelination. Specifically recognizes and binds DNA sequence 5'-CTGGYAC-3' in the regulatory regions of myelin-specific genes and directly activates their expression. Not only required during oligodendrocyte differentiation but is also required on an ongoing basis for the maintenance of expression of myelin genes and for the maintenance of a mature, viable oligodendrocyte phenotype. The sequence is that of Myelin regulatory factor (Myrf) from Mus musculus (Mouse).